A 78-amino-acid chain; its full sequence is Putative membrane protein insertion efficiency factor (78 aa).

Belongs to the UPF0161 family.

It is found in the cell inner membrane. Could be involved in insertion of integral membrane proteins into the membrane. In Prochlorococcus marinus (strain MIT 9312), this protein is Putative membrane protein insertion efficiency factor.